An 838-amino-acid polypeptide reads, in one-letter code: Tuftelin-interacting protein 11 (838 aa).

Basic and acidic residues predominate over residues 1–13 (MSLSHLYRDGEGH). The interval 1–51 (MSLSHLYRDGEGHLDDDDDDERENFEITDWDLQNEFNPNRQRHWQTKEEAT) is required for interaction with DHX15. Disordered regions lie at residues 1–74 (MSLS…RARD) and 86–137 (LKKG…SGGT). At S2 the chain carries Phosphoserine. Over residues 14-29 (LDDDDDDERENFEITD) the composition is skewed to acidic residues. Basic and acidic residues predominate over residues 45–65 (QTKEEATYGVWAERDSDEERP). A phosphoserine mark is found at S60, S96, and S99. Over residues 92–101 (EEADSEDSDA) the composition is skewed to acidic residues. Positions 102–117 (EEKPVKQEDFPKDLGP) are enriched in basic and acidic residues. Position 145 is a phosphoserine (S145). Positions 150–196 (TKGIGQKLLQKMGYVPGRGLGKNAQGIINPIEAKQRKGKGAVGAYGS) constitute a G-patch domain. Residues 193–237 (AYGSERTTQSLQDFPVADSEEEAEEEFQKELSQWRKDPSGSKKKP) form a disordered region. S211 carries the phosphoserine modification. Positions 218-232 (EFQKELSQWRKDPSG) are enriched in basic and acidic residues. A Nuclear localization signal motif is present at residues 701-706 (VKDKFN). The segment at 711–735 (IMNRAVSSNVGAYMQPGARENIAYL) is required for nuclear speckle localization.

This sequence belongs to the TFP11/STIP family. As to quaternary structure, identified in the spliceosome C complex. Found in the Intron Large (IL) complex, a post-mRNA release spliceosomal complex containing the excised intron, U2, U5 and U6 snRNPs, and splicing factors. Interacts with TUFT1. Interacts with DHX15; indicative for a recruitment of DHX15 to the IL complex. Interacts with GCFC2. Widely expressed. In tooth it is expressed in ameloblasts and odontoblasts.

Its subcellular location is the cytoplasm. The protein resides in the nucleus. In terms of biological role, involved in pre-mRNA splicing, specifically in spliceosome disassembly during late-stage splicing events. Intron turnover seems to proceed through reactions in two lariat-intron associated complexes termed Intron Large (IL) and Intron Small (IS). In cooperation with DHX15 seems to mediate the transition of the U2, U5 and U6 snRNP-containing IL complex to the snRNP-free IS complex leading to efficient debranching and turnover of excised introns. May play a role in the differentiation of ameloblasts and odontoblasts or in the forming of the enamel extracellular matrix. The sequence is that of Tuftelin-interacting protein 11 (Tfip11) from Mus musculus (Mouse).